The following is a 400-amino-acid chain: MKNYHAPDEKGFFGEHGGLYVSETLIPALKELEQAYNEAKNDPEFWAEFRRDLKHYVGRPSPVYHAARLSEHLGGAQIWLKREDLNHTGAHKVNNTIGQALLARRMGKKRVIAETGAGQHGVASATVAARFGMTCDVYMGADDIQRQMPNVFRMKLLGANVIGVDSGSRTLKDAMNEAMREWVARVDDTFYIIGTAAGPAPYPEMVRDFQCVIGNEAKAQMQEAIGRQPDVAVACVGGGSNAIGLFYPYIEEENVRLVGVEAGGLGVDTPDHAAPITSGAPIGVLHGFRSYLMQDENGQVLGTHSVSAGLDYPGIGPEHSHLHDIKRVEYTVAKDDEALEAFDLLCRFEGIIPALESSHAVAWAVKNAPKMGKDQVILVNLSGRGDKDINTVAKLKGIEL.

Position 92 is an N6-(pyridoxal phosphate)lysine (lysine 92).

This sequence belongs to the TrpB family. In terms of assembly, tetramer of two alpha and two beta chains. Pyridoxal 5'-phosphate is required as a cofactor.

The enzyme catalyses (1S,2R)-1-C-(indol-3-yl)glycerol 3-phosphate + L-serine = D-glyceraldehyde 3-phosphate + L-tryptophan + H2O. The protein operates within amino-acid biosynthesis; L-tryptophan biosynthesis; L-tryptophan from chorismate: step 5/5. The beta subunit is responsible for the synthesis of L-tryptophan from indole and L-serine. The sequence is that of Tryptophan synthase beta chain from Neisseria gonorrhoeae (strain NCCP11945).